We begin with the raw amino-acid sequence, 310 residues long: 2-dehydro-3-deoxygluconokinase (310 aa).

Residues 29 to 33, tyrosine 89, 103 to 105, and arginine 171 each bind substrate; these read GDTLN and YWR. ATP contacts are provided by residues 169 to 171, 229 to 234, and 262 to 265; these read NYR, KRGADA, and AAGD. Aspartate 265 provides a ligand contact to substrate. Aspartate 265 acts as the Proton acceptor in catalysis.

It belongs to the carbohydrate kinase PfkB family.

The enzyme catalyses 2-dehydro-3-deoxy-D-gluconate + ATP = 2-dehydro-3-deoxy-6-phospho-D-gluconate + ADP + H(+). It participates in carbohydrate acid metabolism; 2-dehydro-3-deoxy-D-gluconate degradation; D-glyceraldehyde 3-phosphate and pyruvate from 2-dehydro-3-deoxy-D-gluconate: step 1/2. Functionally, catalyzes the phosphorylation of 2-keto-3-deoxygluconate (KDG) to produce 2-keto-3-deoxy-6-phosphogluconate (KDPG). In Dickeya dadantii (strain 3937) (Erwinia chrysanthemi (strain 3937)), this protein is 2-dehydro-3-deoxygluconokinase.